The sequence spans 98 residues: Small ribosomal subunit protein bS20 (98 aa).

It belongs to the bacterial ribosomal protein bS20 family.

Its function is as follows. Binds directly to 16S ribosomal RNA. The sequence is that of Small ribosomal subunit protein bS20 from Synechococcus elongatus (strain ATCC 33912 / PCC 7942 / FACHB-805) (Anacystis nidulans R2).